The following is a 513-amino-acid chain: V-type proton ATPase subunit B, kidney isoform (513 aa).

An ATP-binding site is contributed by arginine 394. A PDZ-binding motif is present at residues 510–513 (DTAL).

The protein belongs to the ATPase alpha/beta chains family. In terms of assembly, V-ATPase is a heteromultimeric enzyme made up of two complexes: the ATP-hydrolytic V1 complex and the proton translocation V0 complex. The V1 complex consists of three catalytic AB heterodimers that form a heterohexamer, three peripheral stalks each consisting of EG heterodimers, one central rotor including subunits D and F, and the regulatory subunits C and H. The proton translocation complex V0 consists of the proton transport subunit a, a ring of proteolipid subunits c9c'', rotary subunit d, subunits e and f, and the accessory subunits ATP6AP1/Ac45 and ATP6AP2/PRR. Forms a complex with NHERF1 and SCL4A7. As to expression, kidney; localizes to early distal nephron, encompassing thick ascending limbs and distal convoluted tubules (at protein level). Expressed in the cochlea and endolymphatic sac.

It localises to the apical cell membrane. Its subcellular location is the basolateral cell membrane. Its function is as follows. Non-catalytic subunit of the V1 complex of vacuolar(H+)-ATPase (V-ATPase), a multisubunit enzyme composed of a peripheral complex (V1) that hydrolyzes ATP and a membrane integral complex (V0) that translocates protons. V-ATPase is responsible for acidifying and maintaining the pH of intracellular compartments and in some cell types, is targeted to the plasma membrane, where it is responsible for acidifying the extracellular environment. Essential for the proper assembly and activity of V-ATPase. In renal intercalated cells, mediates secretion of protons (H+) into the urine thereby ensuring correct urinary acidification. Required for optimal olfactory function by mediating the acidification of the nasal olfactory epithelium. The protein is V-type proton ATPase subunit B, kidney isoform (ATP6V1B1) of Homo sapiens (Human).